The chain runs to 875 residues: Leucine--tRNA ligase (875 aa).

A compositionally biased stretch (polar residues) spans 1-20 (MPSAGSVNAANPAVDTSAQT). The interval 1 to 22 (MPSAGSVNAANPAVDTSAQTGR) is disordered. The short motif at 60-70 (PYPSGSLHMGH) is the 'HIGH' region element. The short motif at 634–638 (KMSKS) is the 'KMSKS' region element. Lys-637 lines the ATP pocket.

This sequence belongs to the class-I aminoacyl-tRNA synthetase family.

It is found in the cytoplasm. It carries out the reaction tRNA(Leu) + L-leucine + ATP = L-leucyl-tRNA(Leu) + AMP + diphosphate. The polypeptide is Leucine--tRNA ligase (Synechococcus sp. (strain CC9605)).